Reading from the N-terminus, the 620-residue chain is Acetylcholinesterase 1 (620 aa).

The first 31 residues, 1-31, serve as a signal peptide directing secretion; it reads MRNSLLFFIFLPSTILAVDLIHLHDGSPLFG. Residue N74 is glycosylated (N-linked (GlcNAc...) asparagine). A disulfide bridge connects residues C82 and C109. S216 functions as the Acyl-ester intermediate in the catalytic mechanism. C270 and C286 are joined by a disulfide. N-linked (GlcNAc...) asparagine glycosylation is present at N272. Active-site charge relay system residues include E346 and H468. A disulfide bond links C430 and C558. 2 N-linked (GlcNAc...) asparagine glycosylation sites follow: N486 and N536.

This sequence belongs to the type-B carboxylesterase/lipase family. In terms of assembly, oligomer composed of disulfide-linked homodimers.

Its subcellular location is the synapse. It is found in the secreted. The protein localises to the cell membrane. The enzyme catalyses acetylcholine + H2O = choline + acetate + H(+). Rapidly hydrolyzes acetylcholine and releases choline into the synapse. It can hydrolyze propionylcholine and butyrylthiocholine in vitro. The chain is Acetylcholinesterase 1 (ace-1) from Caenorhabditis elegans.